The primary structure comprises 255 residues: uncharacterized protein (255 aa).

Positions Met-1–Gly-23 are cleaved as a signal peptide. Cys-24 carries N-palmitoyl cysteine lipidation. The S-diacylglycerol cysteine moiety is linked to residue Cys-24.

Belongs to the staphylococcal tandem lipoprotein family.

Its subcellular location is the cell membrane. This is an uncharacterized protein from Staphylococcus aureus (strain N315).